A 704-amino-acid polypeptide reads, in one-letter code: Elongation factor G 1 (704 aa).

Residues 8-285 (EKIRNIGISA…AVCAFLPNPK (278 aa)) enclose the tr-type G domain. Residues 17–24 (AHIDSGKT), 84–88 (DTPGH), and 138–141 (NKMD) contribute to the GTP site.

Belongs to the TRAFAC class translation factor GTPase superfamily. Classic translation factor GTPase family. EF-G/EF-2 subfamily.

It is found in the cytoplasm. Functionally, catalyzes the GTP-dependent ribosomal translocation step during translation elongation. During this step, the ribosome changes from the pre-translocational (PRE) to the post-translocational (POST) state as the newly formed A-site-bound peptidyl-tRNA and P-site-bound deacylated tRNA move to the P and E sites, respectively. Catalyzes the coordinated movement of the two tRNA molecules, the mRNA and conformational changes in the ribosome. This chain is Elongation factor G 1, found in Myxococcus xanthus (strain DK1622).